We begin with the raw amino-acid sequence, 377 residues long: MPDTPTLTLAKDLLSRQSVTPEDAGCQELMIKRLKALGFTIEIMVFEDTTNFWARRGTEAPLFTFAGHTDVVPTGSLTQWNTDPFEPTIIDGMLYARGAADMKGSLACMIVAVERFISEHPEHKGSLSFLITSDEEGPFINGTTRVVDTLKERNEIIDMCIVGEPSSTQYVGDVVKNGRRGSLTGNLTVKGIQGHVAYPHIARNPIHQSMAALLELTMTEWDLGNAYFPPTSFQIPNMNSGTGASNVIPGTAEIMFNFRFSTESTVEGLQQRVIELLDKHNLEYDLDWIINGLPFLTDTGDLLTAVVDAVATVNQQKPELLTTGGTSDGRFIAQMGSQVIELGPVNATIHKVNECVKVDDLEKLTDMYQEVLNNLLA.

Residue His68 participates in Zn(2+) binding. Asp70 is a catalytic residue. Asp101 is a Zn(2+) binding site. The active-site Proton acceptor is the Glu135. Glu136, Glu164, and His350 together coordinate Zn(2+).

Belongs to the peptidase M20A family. DapE subfamily. As to quaternary structure, homodimer. Zn(2+) serves as cofactor. The cofactor is Co(2+).

It catalyses the reaction N-succinyl-(2S,6S)-2,6-diaminopimelate + H2O = (2S,6S)-2,6-diaminopimelate + succinate. Its pathway is amino-acid biosynthesis; L-lysine biosynthesis via DAP pathway; LL-2,6-diaminopimelate from (S)-tetrahydrodipicolinate (succinylase route): step 3/3. Catalyzes the hydrolysis of N-succinyl-L,L-diaminopimelic acid (SDAP), forming succinate and LL-2,6-diaminopimelate (DAP), an intermediate involved in the bacterial biosynthesis of lysine and meso-diaminopimelic acid, an essential component of bacterial cell walls. The protein is Succinyl-diaminopimelate desuccinylase of Aliivibrio salmonicida (strain LFI1238) (Vibrio salmonicida (strain LFI1238)).